The following is a 188-amino-acid chain: RWD domain-containing protein 4 (188 aa).

Positions 9 to 111 constitute an RWD domain; the sequence is MELEALRSIY…EYAKDHKEQF (103 aa). Residues 132–167 form a disordered region; it reads TPTTAPSSKKKEKKEQLSKAQKRKLADKTDHKGELP. The segment covering 155–166 has biased composition (basic and acidic residues); sequence KLADKTDHKGEL.

The protein is RWD domain-containing protein 4 (Rwdd4) of Mus musculus (Mouse).